Reading from the N-terminus, the 312-residue chain is Ribosomal protein L11 methyltransferase (312 aa).

Residues Thr-160, Gly-181, Asp-203, and Asn-246 each coordinate S-adenosyl-L-methionine.

It belongs to the methyltransferase superfamily. PrmA family.

It is found in the cytoplasm. The catalysed reaction is L-lysyl-[protein] + 3 S-adenosyl-L-methionine = N(6),N(6),N(6)-trimethyl-L-lysyl-[protein] + 3 S-adenosyl-L-homocysteine + 3 H(+). Functionally, methylates ribosomal protein L11. The sequence is that of Ribosomal protein L11 methyltransferase from Staphylococcus aureus (strain bovine RF122 / ET3-1).